Consider the following 232-residue polypeptide: Thiamine import ATP-binding protein ThiQ (232 aa).

An ABC transporter domain is found at 2-230 (LKLTDITWLY…KGSASAIWGI (229 aa)). ATP is bound at residue 32–39 (GPSGAGKS).

This sequence belongs to the ABC transporter superfamily. Thiamine importer (TC 3.A.1.19.1) family. The complex is composed of two ATP-binding proteins (ThiQ), two transmembrane proteins (ThiP) and a solute-binding protein (ThiB).

It localises to the cell inner membrane. The catalysed reaction is thiamine(out) + ATP + H2O = thiamine(in) + ADP + phosphate + H(+). Its function is as follows. Part of the ABC transporter complex ThiBPQ involved in thiamine import. Responsible for energy coupling to the transport system. In Shigella flexneri, this protein is Thiamine import ATP-binding protein ThiQ.